The following is a 452-amino-acid chain: Glycylpeptide N-tetradecanoyltransferase (452 aa).

Tetradecanoyl-CoA is bound by residues 38–41 (YKFW), 171–173 (LCI), and 179–183 (SKRLA). Leucine 452 acts as the Proton acceptor; via carboxylate in catalysis.

Belongs to the NMT family. As to quaternary structure, monomer.

The protein resides in the cytoplasm. It catalyses the reaction N-terminal glycyl-[protein] + tetradecanoyl-CoA = N-tetradecanoylglycyl-[protein] + CoA + H(+). Its function is as follows. Adds a myristoyl group to the N-terminal glycine residue of certain cellular proteins. This chain is Glycylpeptide N-tetradecanoyltransferase (NMT1), found in Eremothecium gossypii (strain ATCC 10895 / CBS 109.51 / FGSC 9923 / NRRL Y-1056) (Yeast).